Here is a 423-residue protein sequence, read N- to C-terminus: Glucose-1-phosphate adenylyltransferase (423 aa).

Alpha-D-glucose 1-phosphate-binding positions include tyrosine 110, glycine 175, 190–191 (EK), and serine 208.

The protein belongs to the bacterial/plant glucose-1-phosphate adenylyltransferase family. In terms of assembly, homotetramer.

The catalysed reaction is alpha-D-glucose 1-phosphate + ATP + H(+) = ADP-alpha-D-glucose + diphosphate. It participates in glycan biosynthesis; glycogen biosynthesis. In terms of biological role, involved in the biosynthesis of ADP-glucose, a building block required for the elongation reactions to produce glycogen. Catalyzes the reaction between ATP and alpha-D-glucose 1-phosphate (G1P) to produce pyrophosphate and ADP-Glc. In Nitrosococcus oceani (strain ATCC 19707 / BCRC 17464 / JCM 30415 / NCIMB 11848 / C-107), this protein is Glucose-1-phosphate adenylyltransferase.